The chain runs to 661 residues: Putative DUF21 domain-containing protein At3g13070, chloroplastic (661 aa).

A chloroplast-targeting transit peptide spans 1–71 (MMGMALELSV…RSCEFSYRSR (71 aa)). 5 helical membrane-spanning segments follow: residues 105-125 (GIVI…KVLA), 162-182 (GLIL…ETSI), 213-233 (FLTT…ALVT), 239-259 (IFGE…ILLL), and 285-305 (WLSL…MGIL). Residues 154–340 (VLTVLREQGL…ELSGAIEEEE (187 aa)) enclose the CNNM transmembrane domain. CBS domains lie at 359–420 (MTPL…LLES) and 426–484 (MAHK…IFDE). 2 disordered regions span residues 559–578 (ESWE…QEPK) and 628–661 (SSEE…KKQQ). Acidic residues-rich tracts occupy residues 560–570 (SWEEDGEEEEG) and 630–643 (EEDD…EDQS). Positions 648-661 (LDEHVLADNSKKQQ) are enriched in basic and acidic residues.

It localises to the plastid. The protein resides in the chloroplast membrane. This Arabidopsis thaliana (Mouse-ear cress) protein is Putative DUF21 domain-containing protein At3g13070, chloroplastic (CBSDUFCH1).